The following is a 264-amino-acid chain: tRNA pseudouridine synthase A (264 aa).

Aspartate 51 functions as the Nucleophile in the catalytic mechanism. Tyrosine 109 contributes to the substrate binding site.

The protein belongs to the tRNA pseudouridine synthase TruA family. As to quaternary structure, homodimer.

The catalysed reaction is uridine(38/39/40) in tRNA = pseudouridine(38/39/40) in tRNA. In terms of biological role, formation of pseudouridine at positions 38, 39 and 40 in the anticodon stem and loop of transfer RNAs. The sequence is that of tRNA pseudouridine synthase A from Pseudoalteromonas translucida (strain TAC 125).